A 314-amino-acid chain; its full sequence is Glutathione synthetase (314 aa).

Positions 125-309 (KLFVMNFPQL…VAAKVWDTIE (185 aa)) constitute an ATP-grasp domain. 151–207 (RDKHGAVVMKPLHGHGGAAVFRVMPQDMNFGSLFDMFTVTFKEPWVIQQFIPEVKHG) is an ATP binding site. Residues E280 and N282 each contribute to the Mg(2+) site.

The protein belongs to the prokaryotic GSH synthase family. The cofactor is Mg(2+). Requires Mn(2+) as cofactor.

The catalysed reaction is gamma-L-glutamyl-L-cysteine + glycine + ATP = glutathione + ADP + phosphate + H(+). It participates in sulfur metabolism; glutathione biosynthesis; glutathione from L-cysteine and L-glutamate: step 2/2. The protein is Glutathione synthetase of Bradyrhizobium diazoefficiens (strain JCM 10833 / BCRC 13528 / IAM 13628 / NBRC 14792 / USDA 110).